Reading from the N-terminus, the 277-residue chain is Ribosomal RNA small subunit methyltransferase A (277 aa).

Asparagine 24, leucine 26, glycine 51, glutamate 72, aspartate 96, and asparagine 123 together coordinate S-adenosyl-L-methionine.

The protein belongs to the class I-like SAM-binding methyltransferase superfamily. rRNA adenine N(6)-methyltransferase family. RsmA subfamily.

Its subcellular location is the cytoplasm. The enzyme catalyses adenosine(1518)/adenosine(1519) in 16S rRNA + 4 S-adenosyl-L-methionine = N(6)-dimethyladenosine(1518)/N(6)-dimethyladenosine(1519) in 16S rRNA + 4 S-adenosyl-L-homocysteine + 4 H(+). Its function is as follows. Specifically dimethylates two adjacent adenosines (A1518 and A1519) in the loop of a conserved hairpin near the 3'-end of 16S rRNA in the 30S particle. May play a critical role in biogenesis of 30S subunits. This Ureaplasma parvum serovar 3 (strain ATCC 27815 / 27 / NCTC 11736) protein is Ribosomal RNA small subunit methyltransferase A.